The primary structure comprises 414 residues: Esterase FrsA (414 aa).

This sequence belongs to the FrsA family.

It carries out the reaction a carboxylic ester + H2O = an alcohol + a carboxylate + H(+). Functionally, catalyzes the hydrolysis of esters. The sequence is that of Esterase FrsA from Shigella boydii serotype 4 (strain Sb227).